Here is a 141-residue protein sequence, read N- to C-terminus: Nucleoside diphosphate kinase (141 aa).

ATP contacts are provided by lysine 9, phenylalanine 57, arginine 85, threonine 91, arginine 102, and asparagine 112. Histidine 115 serves as the catalytic Pros-phosphohistidine intermediate.

This sequence belongs to the NDK family. Homotetramer. It depends on Mg(2+) as a cofactor.

The protein localises to the cytoplasm. The enzyme catalyses a 2'-deoxyribonucleoside 5'-diphosphate + ATP = a 2'-deoxyribonucleoside 5'-triphosphate + ADP. The catalysed reaction is a ribonucleoside 5'-diphosphate + ATP = a ribonucleoside 5'-triphosphate + ADP. Major role in the synthesis of nucleoside triphosphates other than ATP. The ATP gamma phosphate is transferred to the NDP beta phosphate via a ping-pong mechanism, using a phosphorylated active-site intermediate. In Chlamydia trachomatis serovar L2 (strain ATCC VR-902B / DSM 19102 / 434/Bu), this protein is Nucleoside diphosphate kinase.